The primary structure comprises 317 residues: Zinc finger protein CRM3 (317 aa).

The span at 1 to 15 (MNFSLSKQSSEKQSS) shows a compositional bias: low complexity. A disordered region spans residues 1-22 (MNFSLSKQSSEKQSSYTDKSRS). 2 consecutive C2H2-type zinc fingers follow at residues 254-276 (KQCPVCGKICSRPSTLKTHYLIH) and 282-306 (FKCTWEGCTKSFNVKSNMLRHLKSH).

Its subcellular location is the nucleus. In terms of biological role, probable transcription factor involved in the regulation of the transcription of genes involved in cell rescue and defense, as well as cell cycle and DNA processing. This is Zinc finger protein CRM3 from Saccharomyces cerevisiae (strain ATCC 204508 / S288c) (Baker's yeast).